The following is a 447-amino-acid chain: MSESQQYLTVTALTQYLKRKFEVDPYLGKVYLTGEVSNYRPRPNTHQYFSLKDDHAKISAIMFKSAFAKVKFQPEEGMKVLVVGRIGLYEPSGSYQIYVERMEPDGVGALYQAYEQLKKKLAAEGLFSAPKKPLPRFPKRIAVVTSRSGAVIRDIITTTRRRFPIAQIVLFPSQVQGDAAAAEISRQIERANAQGDFDTLIIGRGGGSIEDLWPFNEEVVARAIAQSQLPVISSVGHETDTTIADLVADVRAATPTAAAELAVPVYNDVLLQLKQDQTRVFNAFQNFVQRDRQRLNKLQTSYVFTQPNRLYEGYLQKLDFLNERLKQAGQNNFNLASQHYQRVFQQLRQQTPIHQVRQAQTQLLNLQQRLNRGTQLVVRQKRQQLTQTVQSLDLLSPLKIMTRGYAFVTADEQVVHGVKQLQPEQTVAIHMADGEAQAQITKIDGGK.

This sequence belongs to the XseA family. In terms of assembly, heterooligomer composed of large and small subunits.

It is found in the cytoplasm. The catalysed reaction is Exonucleolytic cleavage in either 5'- to 3'- or 3'- to 5'-direction to yield nucleoside 5'-phosphates.. Its function is as follows. Bidirectionally degrades single-stranded DNA into large acid-insoluble oligonucleotides, which are then degraded further into small acid-soluble oligonucleotides. In Lactiplantibacillus plantarum (strain ATCC BAA-793 / NCIMB 8826 / WCFS1) (Lactobacillus plantarum), this protein is Exodeoxyribonuclease 7 large subunit.